The sequence spans 366 residues: 3-dehydroquinate synthase (366 aa).

NAD(+)-binding positions include 71-76, 105-109, 129-130, Lys-142, Lys-151, and 169-172; these read DGEQYK, GVIGD, TT, and CLQT. Residues Glu-184, His-248, and His-265 each contribute to the Zn(2+) site.

It belongs to the sugar phosphate cyclases superfamily. Dehydroquinate synthase family. It depends on NAD(+) as a cofactor. The cofactor is Co(2+). Requires Zn(2+) as cofactor.

Its subcellular location is the cytoplasm. The catalysed reaction is 7-phospho-2-dehydro-3-deoxy-D-arabino-heptonate = 3-dehydroquinate + phosphate. Its pathway is metabolic intermediate biosynthesis; chorismate biosynthesis; chorismate from D-erythrose 4-phosphate and phosphoenolpyruvate: step 2/7. Functionally, catalyzes the conversion of 3-deoxy-D-arabino-heptulosonate 7-phosphate (DAHP) to dehydroquinate (DHQ). This is 3-dehydroquinate synthase from Photorhabdus laumondii subsp. laumondii (strain DSM 15139 / CIP 105565 / TT01) (Photorhabdus luminescens subsp. laumondii).